Reading from the N-terminus, the 1513-residue chain is DNA topoisomerase 2-binding protein 1-A (1513 aa).

BRCT domains are found at residues 101-189 (VYNM…YSDV) and 194-283 (YLCP…MYKI). Positions 289-308 (IKSVPDTSTPTGGNSKPNSR) are disordered. 3 BRCT domains span residues 354–444 (APDD…IYFH), 530–621 (ADTS…SNAL), and 629–726 (EGST…SYLV). A compositionally biased stretch (polar residues) spans 789–799 (QHNKNPQTSGG). A disordered region spans residues 789–809 (QHNKNPQTSGGESKVLQREPS). A Nuclear localization signal motif is present at residues 844–850 (PNQKNRT). The BRCT 6 domain occupies 892–984 (DNSKLLINVV…KRVPEALYPH (93 aa)). Disordered regions lie at residues 1031–1053 (ETSD…SKDV) and 1086–1109 (SVGR…RNGR). At Ser1131 the chain carries Phosphoserine. BRCT domains lie at 1253 to 1344 (SKEE…DYEW) and 1383 to 1480 (IAEG…NYCL). A Nuclear localization signal motif is present at residues 1508–1511 (KRSR).

This sequence belongs to the TOPBP1 family. Interacts with cdc45. Interacts (via BRCT domains) with ticrr; interaction is cdk2-dependent. Interacts with atr in the presence of atrip. Interacts with recql4 (via N-terminus). Interacts with gmnc. Interacts with cip2a; forming the CIP2A-TOPBP1 complex. Phosphorylation at Ser-1131 is essential for phosphorylation of chek1, and thus for checkpoint regulation.

The protein resides in the nucleus. It is found in the chromosome. It localises to the cytoplasm. The protein localises to the cytoskeleton. Its subcellular location is the microtubule organizing center. The protein resides in the centrosome. It is found in the spindle pole. Functionally, scaffold protein that acts as a key protein-protein adapter in DNA replication and DNA repair. Composed of multiple BRCT domains, which specifically recognize and bind phosphorylated proteins, bringing proteins together into functional combinations. Required for DNA replication initiation but not for the formation of pre-replicative complexes or the elongation stages. Necessary for the loading of replication factors onto chromatin, including gmnc, cdc45, DNA polymerases and components of the GINS complex such as ginsl/sld5. Plays a central role in DNA repair by bridging proteins and promoting recruitment of proteins to DNA damage sites. Involved in double-strand break (DSB) repair via homologous recombination in S-phase by promoting the exchange between the DNA replication factor A (RPA) complex and RAD51. Involved in microhomology-mediated end-joining (MMEJ) DNA repair by promoting recruitment of polymerase theta (POLQ) to DNA damage sites during mitosis. In response to DNA damage, triggers the recruitment of checkpoint signaling proteins on chromatin, which activate the chek1 signaling pathway and block S-phase progression. Increases the kinase activity of atr to numerous substrates, and is required for the phosphorylation of Rad1. Together with cip2a, plays an essential role in the response to genome instability generated by the presence of acentric chromosome fragments derived from shattered chromosomes within micronuclei. The CIP2A-TOPBP1 complex tethers chromosome fragments during mitosis to ensure clustered segregation of the fragments to a single daughter cell nucleus, facilitating re-ligation with limited chromosome scattering and loss. This chain is DNA topoisomerase 2-binding protein 1-A (topbp1-A), found in Xenopus laevis (African clawed frog).